The following is a 199-amino-acid chain: Pyridoxal 5'-phosphate synthase subunit PdxT (199 aa).

L-glutamine is bound at residue 52-54 (GES). Cys-84 (nucleophile) is an active-site residue. Residues Arg-115 and 143 to 144 (IR) each bind L-glutamine. Active-site charge relay system residues include His-179 and Glu-181.

It belongs to the glutaminase PdxT/SNO family. In the presence of PdxS, forms a dodecamer of heterodimers. Only shows activity in the heterodimer.

The catalysed reaction is aldehydo-D-ribose 5-phosphate + D-glyceraldehyde 3-phosphate + L-glutamine = pyridoxal 5'-phosphate + L-glutamate + phosphate + 3 H2O + H(+). The enzyme catalyses L-glutamine + H2O = L-glutamate + NH4(+). The protein operates within cofactor biosynthesis; pyridoxal 5'-phosphate biosynthesis. Functionally, catalyzes the hydrolysis of glutamine to glutamate and ammonia as part of the biosynthesis of pyridoxal 5'-phosphate. The resulting ammonia molecule is channeled to the active site of PdxS. The polypeptide is Pyridoxal 5'-phosphate synthase subunit PdxT (Methanosarcina acetivorans (strain ATCC 35395 / DSM 2834 / JCM 12185 / C2A)).